The chain runs to 474 residues: Synaptotagmin-17 (474 aa).

The tract at residues 54–112 (PAQTPPWLVSNRSEDKEGDSDNTTSEPPATPQDTSPDRRRSSSDTSRSTYSLTRRISSL) is disordered. Positions 96–112 (SDTSRSTYSLTRRISSL) are enriched in low complexity. C2 domains lie at 184-310 (QLGM…HWWK) and 321-455 (ELGE…EQWH).

The protein belongs to the synaptotagmin family.

The protein localises to the membrane. In terms of biological role, may play a role in dendrite formation by melanocytes. The sequence is that of Synaptotagmin-17 (syt17) from Xenopus tropicalis (Western clawed frog).